We begin with the raw amino-acid sequence, 483 residues long: Islet cell autoantigen 1 (483 aa).

An AH domain is found at 51–254 (ASDADLDAKL…TSHTMAAIHE (204 aa)). A disordered region spans residues 281-321 (EEKKKINQQESTDAAVQEPSQLISLEEENQRKESSSFKTED). Polar residues predominate over residues 288–303 (QQESTDAAVQEPSQLI). Residues 308-321 (ENQRKESSSFKTED) show a composition bias toward basic and acidic residues.

As to expression, expressed abundantly in pancreas, heart and brain with low levels of expression in lung, kidney, liver and thyroid.

The protein localises to the cytoplasm. It is found in the cytosol. It localises to the golgi apparatus membrane. The protein resides in the cytoplasmic vesicle. Its subcellular location is the secretory vesicle membrane. The protein localises to the secretory vesicle. It is found in the synaptic vesicle membrane. In terms of biological role, may play a role in neurotransmitter secretion. The protein is Islet cell autoantigen 1 (ICA1) of Homo sapiens (Human).